The primary structure comprises 87 residues: MANIKSAKKRALQSERRRQHNASRRSMTRTSLKKVLAAIASGDKASAQAAFAAATPLIDRMATKGLIHKNKAARHKSRLSAQIKALA.

A compositionally biased stretch (basic residues) spans 1 to 27 (MANIKSAKKRALQSERRRQHNASRRSM). Residues 1–31 (MANIKSAKKRALQSERRRQHNASRRSMTRTS) are disordered.

The protein belongs to the bacterial ribosomal protein bS20 family.

Its function is as follows. Binds directly to 16S ribosomal RNA. This Pseudoalteromonas atlantica (strain T6c / ATCC BAA-1087) protein is Small ribosomal subunit protein bS20.